Consider the following 284-residue polypeptide: NADH-cytochrome b5 reductase 1 (284 aa).

The chain crosses the membrane as a helical span at residues 7–27 (KLVVVIVIVVVPLLFKFIIGP). Positions 38–142 (NDFQSFPLVE…KGPRGNYHYE (105 aa)) constitute an FAD-binding FR-type domain. An FAD-binding site is contributed by 148-180 (HLGMIAGGTGIAPMYQIMKAIAMDSHDTTKVSL).

The protein belongs to the flavoprotein pyridine nucleotide cytochrome reductase family. In terms of assembly, monomer. Component of the 2-(3-amino-3-carboxypropyl)histidine synthase complex composed of DPH1, DPH2, KTI11/DPH3 and a NADH-dependent reductase, predominantly CBR1. Interacts with KTI11/DPH3. Interacts with STE20. It depends on FAD as a cofactor.

The protein resides in the mitochondrion outer membrane. The catalysed reaction is 2 Fe(III)-[cytochrome b5] + NADH = 2 Fe(II)-[cytochrome b5] + NAD(+) + H(+). It carries out the reaction 2 Fe(3+)-[Dph3] + NADH = 2 Fe(2+)-[Dph3] + NAD(+) + H(+). Its pathway is protein modification; peptidyl-diphthamide biosynthesis. Competitively inhibited by NAD(+). Inhibited by mercurials such as p-chloromercuribenzoate (PCMB) and HgCl(2). Enzymatic activity increases under anaerobic conditions. In terms of biological role, NADH-dependent reductase for KTI11/DPH3 and cytochrome b5. Required for the first step of diphthamide biosynthesis, a post-translational modification of histidine which occurs in elongation factor 2. DPH1 and DPH2 transfer a 3-amino-3-carboxypropyl (ACP) group from S-adenosyl-L-methionine (SAM) to a histidine residue, the reaction is assisted by a reduction system comprising KTI11/DPH3 and a NADH-dependent reductase, predominantly CBR1. By reducing KTI11/DPH3, also involved in the formation of the tRNA wobble base modification mcm5s 2U (5-methoxycarbonylmethyl-2-thiouridine), mediated by the elongator complex. The cytochrome b5/NADH cytochrome b5 reductase electron transfer system supports the catalytic activity of several sterol biosynthetic enzymes. Plays a role in bud morphology. This chain is NADH-cytochrome b5 reductase 1 (CBR1), found in Saccharomyces cerevisiae (strain YJM789) (Baker's yeast).